Consider the following 72-residue polypeptide: DNA-directed RNA polymerase subunit omega (72 aa).

It belongs to the RNA polymerase subunit omega family. In terms of assembly, the RNAP catalytic core consists of 2 alpha, 1 beta, 1 beta' and 1 omega subunit. When a sigma factor is associated with the core the holoenzyme is formed, which can initiate transcription.

The enzyme catalyses RNA(n) + a ribonucleoside 5'-triphosphate = RNA(n+1) + diphosphate. Promotes RNA polymerase assembly. Latches the N- and C-terminal regions of the beta' subunit thereby facilitating its interaction with the beta and alpha subunits. In Campylobacter lari (strain RM2100 / D67 / ATCC BAA-1060), this protein is DNA-directed RNA polymerase subunit omega.